A 420-amino-acid polypeptide reads, in one-letter code: Exodeoxyribonuclease 7 large subunit (420 aa).

Belongs to the XseA family. Heterooligomer composed of large and small subunits.

Its subcellular location is the cytoplasm. It catalyses the reaction Exonucleolytic cleavage in either 5'- to 3'- or 3'- to 5'-direction to yield nucleoside 5'-phosphates.. Bidirectionally degrades single-stranded DNA into large acid-insoluble oligonucleotides, which are then degraded further into small acid-soluble oligonucleotides. The chain is Exodeoxyribonuclease 7 large subunit from Helicobacter pylori (strain J99 / ATCC 700824) (Campylobacter pylori J99).